Consider the following 74-residue polypeptide: Exodeoxyribonuclease 7 small subunit (74 aa).

The protein belongs to the XseB family. Heterooligomer composed of large and small subunits.

The protein localises to the cytoplasm. The catalysed reaction is Exonucleolytic cleavage in either 5'- to 3'- or 3'- to 5'-direction to yield nucleoside 5'-phosphates.. In terms of biological role, bidirectionally degrades single-stranded DNA into large acid-insoluble oligonucleotides, which are then degraded further into small acid-soluble oligonucleotides. The protein is Exodeoxyribonuclease 7 small subunit of Haemophilus ducreyi (strain 35000HP / ATCC 700724).